The chain runs to 503 residues: ATP synthase subunit alpha (503 aa).

170-177 (GDRQTGKT) lines the ATP pocket.

This sequence belongs to the ATPase alpha/beta chains family. As to quaternary structure, F-type ATPases have 2 components, CF(1) - the catalytic core - and CF(0) - the membrane proton channel. CF(1) has five subunits: alpha(3), beta(3), gamma(1), delta(1), epsilon(1). CF(0) has three main subunits: a(1), b(2) and c(9-12). The alpha and beta chains form an alternating ring which encloses part of the gamma chain. CF(1) is attached to CF(0) by a central stalk formed by the gamma and epsilon chains, while a peripheral stalk is formed by the delta and b chains.

It localises to the cell inner membrane. It carries out the reaction ATP + H2O + 4 H(+)(in) = ADP + phosphate + 5 H(+)(out). In terms of biological role, produces ATP from ADP in the presence of a proton gradient across the membrane. The alpha chain is a regulatory subunit. In Thermotoga maritima (strain ATCC 43589 / DSM 3109 / JCM 10099 / NBRC 100826 / MSB8), this protein is ATP synthase subunit alpha.